The primary structure comprises 613 residues: Laccase 1 (613 aa).

The first 20 residues, 1–20 (MSRFARLLLIVALFFTGAWA), serve as a signal peptide directing secretion. Plastocyanin-like domains lie at 29-142 (ITWK…IRPK) and 171-359 (YLVV…MRIP). N-linked (GlcNAc...) asparagine glycosylation occurs at asparagine 74. 4 residues coordinate Cu cation: histidine 78, histidine 80, histidine 122, and histidine 124. N-linked (GlcNAc...) asparagine glycans are attached at residues asparagine 256, asparagine 279, asparagine 444, asparagine 468, and asparagine 484. Residues 468–598 (NATRDTENDG…GGMGIAILDG (131 aa)) enclose the Plastocyanin-like 3 domain. Cu cation contacts are provided by histidine 506, histidine 509, and histidine 511. Asparagine 526 carries an N-linked (GlcNAc...) asparagine glycan. 4 residues coordinate Cu cation: histidine 580, cysteine 581, histidine 582, and histidine 586.

Belongs to the multicopper oxidase family. Requires Cu cation as cofactor.

The protein resides in the cell surface. Its pathway is pigment biosynthesis. Its function is as follows. Laccase; part of the Pks1 gene cluster that mediates the biosynthesis of an anthraquinone derivative pigment that contributes to conidial pigmentation that provides protection from UV radiation, heat and cold stress. The polyketide synthase Pks1 produces 1-acetyl-2,4,6,8-tetrahydroxy-9,10-anthraquinone though condensation of acetyl-CoA with malonyl-CoA. The dehydratase EthD and the laccase Mlac1 further convert the anthraquinone derivative into the final conidial pigment. The chain is Laccase 1 from Metarhizium guizhouense (strain ARSEF 977).